We begin with the raw amino-acid sequence, 669 residues long: Glycerol uptake/efflux facilitator protein (669 aa).

Residues 1–16 (MSNPQKALNDFLSSES) are compositionally biased toward polar residues. 2 disordered regions span residues 1-99 (MSNP…TYVP) and 123-147 (QDINHKDNGPPSASSNRAFRPRGQT). Residues 1–254 (MSNPQKALND…WSSVKNTYLK (254 aa)) lie on the Extracellular side of the membrane. Over residues 50 to 68 (NNNNNNNNNNNNSNNNNNG) the composition is skewed to low complexity. The segment covering 72–81 (GNDDDYDYEM) has biased composition (acidic residues). Polar residues-rich tracts occupy residues 87–99 (SPQSARPTPTYVP) and 133–147 (PSASSNRAFRPRGQT). S150 carries the phosphoserine modification. The segment at 167–215 (HTIPESHLSRRRSRSRATSNAGHSANTGATNGRTTGAQTNMESNESPRN) is disordered. T168 carries the post-translational modification Phosphothreonine. The segment covering 191–206 (ANTGATNGRTTGAQTN) has biased composition (low complexity). Residues S209 and S212 each carry the phosphoserine modification. Residues 255–275 (EFLAEFMGTMVMIIFGSAVVC) form a helical membrane-spanning segment. The Cytoplasmic portion of the chain corresponds to 276 to 325 (QVNVAGKIQQDNFNVALDNLNVTGSSAETIDAMKSLTSLVSSVAGGTFDD). The helical transmembrane segment at 326–346 (VALGWAAAVVMGYFCAGGSAI) threads the bilayer. Residues 347-369 (SGAHLNPSITLANLVYRGFPLKK) are Extracellular-facing. The NPA 1 signature appears at 352-354 (NPS). The helical transmembrane segment at 370–390 (VPYYFAGQLIGAFTGALILFI) threads the bilayer. Residues 391-446 (WYKRVLQEAYSDWWMNESVAGMFCVFPKPYLSSGRQFFSEFLCGAMLQAGTFALTD) lie on the Cytoplasmic side of the membrane. A helical membrane pass occupies residues 447–467 (PYTCLSSDVFPLMMFILIFII). Over 468 to 506 (NASMAYQTGTAMNLARDLGPRLALYAVGFDHKMLWVHHH) the chain is Extracellular. The short motif at 480–482 (NLA) is the NPA 2 element. A helical transmembrane segment spans residues 507-527 (HFFWVPMVGPFIGALMGGLVY). Over 528–669 (DVCIYQGHES…SHYGNAKKVT (142 aa)) the chain is Cytoplasmic. Disordered regions lie at residues 591–615 (LQKTKTKSSISDNENEAGEKKVQFK) and 635–669 (DSIETASLGATTTDSIGLSDTSSEDSHYGNAKKVT). The segment covering 638-655 (ETASLGATTTDSIGLSDT) has biased composition (polar residues).

The protein belongs to the MIP/aquaporin (TC 1.A.8) family.

It is found in the membrane. Channel protein for glycerol. Has a role in both glycerol influx and efflux. Plays a role in osmoregulation: under osmotic stress the channel is apparently closed to allow accumulation of glycerol in the cell under hyperosmotic conditions. The sequence is that of Glycerol uptake/efflux facilitator protein (FPS1) from Saccharomyces cerevisiae (strain ATCC 204508 / S288c) (Baker's yeast).